A 523-amino-acid polypeptide reads, in one-letter code: Sorting nexin-2 (523 aa).

The tract at residues 1-104 is disordered; that stretch reads MAAEREPPPL…EPSPAVTPVT (104 aa). Composition is skewed to low complexity over residues 27–50 and 93–104; these read LFTS…LPAE and SSEPSPAVTPVT. Ser97 is modified (phosphoserine). Phosphothreonine occurs at positions 101 and 104. Residues Ser117 and Ser119 each carry the phosphoserine modification. The PX domain occupies 140–269; that stretch reads FDIEIGVSDP…QFLESSELPR (130 aa). A 1,2-diacyl-sn-glycero-3-phospho-(1D-myo-inositol-3-phosphate) contacts are provided by Arg183, Ser185, Lys211, and Arg235. Ser185 bears the Phosphoserine mark. The tract at residues 260–523 is interaction with RhoG; that stretch reads QFLESSELPR…AFLPEAKAIA (264 aa). A Phosphoserine modification is found at Ser277. Residues 278-295 form a membrane-binding amphipathic helix region; sequence GAGILRMVNKAADAVNKM. The 225-residue stretch at 299–523 folds into the BAR domain; it reads MNESDAWFEE…AFLPEAKAIA (225 aa). Lys473 is modified (N6-acetyllysine).

This sequence belongs to the sorting nexin family. Predominantly forms heterodimers with BAR domain-containing sorting nexins SNX5, SNX6 and SNX32; can self-associate to form homodimers. The heterodimers are proposed to self-assemble into helical arrays on the membrane to stabilize and expand local membrane curvature underlying endosomal tubule formation. Thought to be a component of the originally described retromer complex (also called SNX-BAR retromer) which is a pentamer containing the heterotrimeric retromer cargo-selective complex (CSC), also described as vacuolar protein sorting subcomplex (VPS), and a heterodimeric membrane-deforming subcomplex formed between SNX1 or SNX2 and SNX5 or SNX6 (also called SNX-BAR subcomplex); the respective CSC and SNX-BAR subcomplexes associate with low affinity. Interacts with SNX5, SNX6, SNX32, VPS26A, VPS29, VPS35, FNBP1, KALRN, RHOG (GDP-bound form).

It localises to the early endosome membrane. It is found in the cell projection. Its subcellular location is the lamellipodium. Its function is as follows. Involved in several stages of intracellular trafficking. Interacts with membranes containing phosphatidylinositol 3-phosphate (PtdIns(3P)) or phosphatidylinositol 3,5-bisphosphate (PtdIns(3,5)P2). Acts in part as component of the retromer membrane-deforming SNX-BAR subcomplex. The SNX-BAR retromer mediates retrograde transport of cargo proteins from endosomes to the trans-Golgi network (TGN) and is involved in endosome-to-plasma membrane transport for cargo protein recycling. The SNX-BAR subcomplex functions to deform the donor membrane into a tubular profile called endosome-to-TGN transport carrier (ETC). Can sense membrane curvature and has in vitro vesicle-to-membrane remodeling activity. Required for retrograde endosome-to-TGN transport of TGN38. Promotes KALRN- and RHOG-dependent but retromer-independent membrane remodeling such as lamellipodium formation; the function is dependent on GEF activity of KALRN. This Macaca fascicularis (Crab-eating macaque) protein is Sorting nexin-2 (SNX2).